Consider the following 469-residue polypeptide: tRNA modification GTPase MnmE (469 aa).

Arg38, Glu95, and Arg134 together coordinate (6S)-5-formyl-5,6,7,8-tetrahydrofolate. The TrmE-type G domain maps to 230–392 (GIRVALVGPP…LRRGLAALVD (163 aa)). GTP is bound by residues 240-245 (NAGKSS), 259-265 (SAQAGTT), and 284-287 (DTAG). Mg(2+) is bound by residues Ser244 and Thr265. Residue Lys468 participates in (6S)-5-formyl-5,6,7,8-tetrahydrofolate binding.

It belongs to the TRAFAC class TrmE-Era-EngA-EngB-Septin-like GTPase superfamily. TrmE GTPase family. As to quaternary structure, homodimer. Heterotetramer of two MnmE and two MnmG subunits. It depends on K(+) as a cofactor.

It localises to the cytoplasm. Functionally, exhibits a very high intrinsic GTPase hydrolysis rate. Involved in the addition of a carboxymethylaminomethyl (cmnm) group at the wobble position (U34) of certain tRNAs, forming tRNA-cmnm(5)s(2)U34. The chain is tRNA modification GTPase MnmE from Halorhodospira halophila (strain DSM 244 / SL1) (Ectothiorhodospira halophila (strain DSM 244 / SL1)).